Reading from the N-terminus, the 765-residue chain is Protein transport protein sec23-2 (765 aa).

Zn(2+)-binding residues include Cys-56, Cys-60, Cys-79, and Cys-82. Ser-565 and Ser-566 each carry phosphoserine.

This sequence belongs to the SEC23/SEC24 family. SEC23 subfamily. The COPII coat is composed of at least 5 proteins: the sec23/24 complex, the sec13/31 complex, and the protein sar1.

The protein resides in the cytoplasm. It localises to the cytoplasmic vesicle. The protein localises to the COPII-coated vesicle membrane. Its subcellular location is the endoplasmic reticulum membrane. It is found in the golgi apparatus membrane. Functionally, component of the coat protein complex II (COPII) which promotes the formation of transport vesicles from the endoplasmic reticulum (ER). The coat has two main functions, the physical deformation of the endoplasmic reticulum membrane into vesicles and the selection of cargo molecules. The sequence is that of Protein transport protein sec23-2 (sec232) from Schizosaccharomyces pombe (strain 972 / ATCC 24843) (Fission yeast).